A 283-amino-acid polypeptide reads, in one-letter code: Pantothenate synthetase (283 aa).

30 to 37 (MGNLHQGH) serves as a coordination point for ATP. Histidine 37 acts as the Proton donor in catalysis. Glutamine 61 is a binding site for (R)-pantoate. Glutamine 61 contributes to the beta-alanine binding site. 149–152 (GEKD) contributes to the ATP binding site. Glutamine 155 contacts (R)-pantoate. ATP-binding positions include valine 178 and 186–189 (FSSR).

This sequence belongs to the pantothenate synthetase family. In terms of assembly, homodimer.

The protein localises to the cytoplasm. The enzyme catalyses (R)-pantoate + beta-alanine + ATP = (R)-pantothenate + AMP + diphosphate + H(+). It participates in cofactor biosynthesis; (R)-pantothenate biosynthesis; (R)-pantothenate from (R)-pantoate and beta-alanine: step 1/1. Its function is as follows. Catalyzes the condensation of pantoate with beta-alanine in an ATP-dependent reaction via a pantoyl-adenylate intermediate. This is Pantothenate synthetase from Proteus mirabilis (strain HI4320).